Reading from the N-terminus, the 293-residue chain is Aspartate carbamoyltransferase catalytic subunit (293 aa).

The carbamoyl phosphate site is built by arginine 50 and threonine 51. Position 78 (lysine 78) interacts with L-aspartate. Carbamoyl phosphate contacts are provided by arginine 100, histidine 127, and glutamine 130. Arginine 160 and arginine 210 together coordinate L-aspartate. Alanine 253 and proline 254 together coordinate carbamoyl phosphate.

This sequence belongs to the aspartate/ornithine carbamoyltransferase superfamily. ATCase family. Heterododecamer (2C3:3R2) of six catalytic PyrB chains organized as two trimers (C3), and six regulatory PyrI chains organized as three dimers (R2).

It catalyses the reaction carbamoyl phosphate + L-aspartate = N-carbamoyl-L-aspartate + phosphate + H(+). Its pathway is pyrimidine metabolism; UMP biosynthesis via de novo pathway; (S)-dihydroorotate from bicarbonate: step 2/3. In terms of biological role, catalyzes the condensation of carbamoyl phosphate and aspartate to form carbamoyl aspartate and inorganic phosphate, the committed step in the de novo pyrimidine nucleotide biosynthesis pathway. The polypeptide is Aspartate carbamoyltransferase catalytic subunit (Staphylococcus epidermidis (strain ATCC 35984 / DSM 28319 / BCRC 17069 / CCUG 31568 / BM 3577 / RP62A)).